The primary structure comprises 670 residues: Pescadillo homolog (670 aa).

Positions 292–321 form a coiled coil; it reads GANQAQAKVKEAESKRSLMEEELLKVRELF. One can recognise a BRCT domain in the interval 316–402; it reads KVRELFRGLT…QMLPVTGYRI (87 aa). A disordered region spans residues 643-670; that stretch reads RQRAEAKGKKLKEKKADNPYKKLPKWVQ. The span at 644–662 shows a compositional bias: basic and acidic residues; it reads QRAEAKGKKLKEKKADNPY.

Belongs to the pescadillo family.

The protein resides in the nucleus. The protein localises to the nucleolus. It is found in the nucleoplasm. In terms of biological role, required for maturation of ribosomal RNAs and formation of the large ribosomal subunit. This chain is Pescadillo homolog, found in Leishmania braziliensis.